The sequence spans 379 residues: Dual-specificity RNA methyltransferase RlmN (379 aa).

Residue Glu-95 is the Proton acceptor of the active site. Positions 101-345 (EETRGTLCVS…TTVRKTRGDD (245 aa)) constitute a Radical SAM core domain. A disulfide bond links Cys-108 and Cys-350. Residues Cys-115, Cys-119, and Cys-122 each coordinate [4Fe-4S] cluster. S-adenosyl-L-methionine-binding positions include 176-177 (GE), Ser-208, 230-232 (SLH), and Asn-307. The active-site S-methylcysteine intermediate is the Cys-350.

This sequence belongs to the radical SAM superfamily. RlmN family. It depends on [4Fe-4S] cluster as a cofactor.

Its subcellular location is the cytoplasm. It catalyses the reaction adenosine(2503) in 23S rRNA + 2 reduced [2Fe-2S]-[ferredoxin] + 2 S-adenosyl-L-methionine = 2-methyladenosine(2503) in 23S rRNA + 5'-deoxyadenosine + L-methionine + 2 oxidized [2Fe-2S]-[ferredoxin] + S-adenosyl-L-homocysteine. The enzyme catalyses adenosine(37) in tRNA + 2 reduced [2Fe-2S]-[ferredoxin] + 2 S-adenosyl-L-methionine = 2-methyladenosine(37) in tRNA + 5'-deoxyadenosine + L-methionine + 2 oxidized [2Fe-2S]-[ferredoxin] + S-adenosyl-L-homocysteine. Specifically methylates position 2 of adenine 2503 in 23S rRNA and position 2 of adenine 37 in tRNAs. m2A2503 modification seems to play a crucial role in the proofreading step occurring at the peptidyl transferase center and thus would serve to optimize ribosomal fidelity. This chain is Dual-specificity RNA methyltransferase RlmN, found in Burkholderia vietnamiensis (strain G4 / LMG 22486) (Burkholderia cepacia (strain R1808)).